We begin with the raw amino-acid sequence, 388 residues long: MASEMSKNVKVTDDQEVTSQERDQSGGTKVGGEEEIAPLARQSSILSLTLEELQNSLCEPGRNFGSMNMDEFVANIWNAEEFQATTGGCKGAMEEAKVVDSGSGSGDAGGSGLCRQGSFSLPLPLCQKTVEEVWTEINQAPAHTSAPASALQPHAGSGGVAANDRQVTLGEMTLEDFLVKAGVVRGSFTGQAAMGSGMVNGPVNPMQQGQGGPMMFPVGPVNAMYPVMGDGMGYPGGYNGMAIVPPPPPAQGAMVVVSPGSSDGMSAMTHADMMNCIGNGMMIENGTRKRPHREDGCAEKTVERRQRRMIKNRESAARSRARKQAYTVELEAELNYLKQENARLKEAEKTVLLTKKQMLVEKMMEQSKEKMNANRGGSQLRRSGSCMW.

The tract at residues 1–36 (MASEMSKNVKVTDDQEVTSQERDQSGGTKVGGEEEI) is disordered. Position 44 is a phosphoserine (Ser44). A bZIP domain is found at 302-365 (VERRQRRMIK…KQMLVEKMME (64 aa)). Residues 304-323 (RRQRRMIKNRESAARSRARK) are basic motif. The leucine-zipper stretch occupies residues 330 to 344 (LEAELNYLKQENARL). The interval 368 to 388 (KEKMNANRGGSQLRRSGSCMW) is disordered.

Belongs to the bZIP family. ABI5 subfamily. As to quaternary structure, forms homodimers. Interacts with VP1. Interacts with GF14D. Interacts with PP2C51. Interacts with SAPK2. In terms of processing, phosphorylated at Ser-44 by SAPK6. As to expression, expressed in roots, leaves and panicles. Expressed in seeds.

It localises to the nucleus. In terms of biological role, transcription factor that possesses transactivation activity in yeast. Involved in abscisic acid (ABA) signaling pathway. Binds to the G-box motif 5'-CACGTG-3' of TRAB1 gene promoter. Involved in the regulation of pollen maturation. May act as negative regulator of salt stress response. Together with PYL5, PP2C30 and SAPK2, is part of an ABA signaling unit that modulates seed germination and early seedling growth. This is bZIP transcription factor ABI5 homolog from Oryza sativa subsp. japonica (Rice).